The primary structure comprises 466 residues: MSEQKSSNQMWGGRFASGPDAIMEEINASIGFDRKLYAQDIQGSLAHAAMLAKTGIIAAEDHRQIEDGLKTILKEIEDGKFTFSRKLEDIHMNIEARLADLIGPSAGRLHTARSRNDQVAVDFRLWVKQELEKTAAALKNLIEAFLERAEEHAATVMPGFTHLQTAQPVTFGHHCMAYVEMFGRDLSRVRDAIERMDESPLGAAALAGTGFPIDRHMTAKALGFREPTRNSLDSVSDRDYALEFLSLAAICAGHLSRLAEEIVIWSTPQFNFVRLSDAFSTGSSIMPQKKNPDAAELVRAKTGRINGSLVALLTIMKGLPLAYSKDMQEDKEQVFDAAENLELAIAAMAGMVRDLTINVASMKKAAGSGYSTATDLADWLVRELGLPFREAHHVTGRAVALAESRKVDLAKLSLEELQSIHPGITDAIFGYLTVEKSVKSRQSFGGTAPQEVRRQIRYWKKRITKA.

This sequence belongs to the lyase 1 family. Argininosuccinate lyase subfamily.

The protein localises to the cytoplasm. The catalysed reaction is 2-(N(omega)-L-arginino)succinate = fumarate + L-arginine. The protein operates within amino-acid biosynthesis; L-arginine biosynthesis; L-arginine from L-ornithine and carbamoyl phosphate: step 3/3. This chain is Argininosuccinate lyase, found in Brucella anthropi (strain ATCC 49188 / DSM 6882 / CCUG 24695 / JCM 21032 / LMG 3331 / NBRC 15819 / NCTC 12168 / Alc 37) (Ochrobactrum anthropi).